The sequence spans 89 residues: Sec-independent protein translocase protein TatA (89 aa).

Residues 1–21 (MGGISIWQLLIIALIVVLLFG) traverse the membrane as a helical segment. Residues 47-61 (EEKKALEENATDKPA) show a composition bias toward basic and acidic residues. A disordered region spans residues 47 to 89 (EEKKALEENATDKPAADTAKVTETAKVAETAEKKAESKGKEQA). The span at 62 to 74 (ADTAKVTETAKVA) shows a compositional bias: low complexity. A compositionally biased stretch (basic and acidic residues) spans 75–89 (ETAEKKAESKGKEQA).

This sequence belongs to the TatA/E family. As to quaternary structure, the Tat system comprises two distinct complexes: a TatABC complex, containing multiple copies of TatA, TatB and TatC subunits, and a separate TatA complex, containing only TatA subunits. Substrates initially bind to the TatABC complex, which probably triggers association of the separate TatA complex to form the active translocon.

It localises to the cell inner membrane. Its function is as follows. Part of the twin-arginine translocation (Tat) system that transports large folded proteins containing a characteristic twin-arginine motif in their signal peptide across membranes. TatA could form the protein-conducting channel of the Tat system. The chain is Sec-independent protein translocase protein TatA from Shewanella pealeana (strain ATCC 700345 / ANG-SQ1).